A 274-amino-acid polypeptide reads, in one-letter code: MGTPWRKRKGITQVGTMSPAIALAFLPLVVTLLVRYRHYFRLLVGTVLLRSLRDCLSGLRIEERAFSYVLTHALPGDPGHILTTLDHWSSHCEYLSHMGPVKGQILMRLVEEKAPACVLELGTYCGYSTLLIAQALPPGGRLLTVERDPRTAAVAEKLIRLAGFDEHMVELIVGSSEEVIPCLRTQYQLSRADLVLLIHRPRCYLRDLQLLEAHALLPAGATVLADHVLFPGAPRFLQYAKSCGRYRCRLYHTGLPDFPAIKDGIAQLTYAGPG.

Residues 14–34 (VGTMSPAIALAFLPLVVTLLV) traverse the membrane as a helical segment. S-adenosyl-L-methionine is bound by residues Glu-120, 122-123 (GT), Ser-128, Glu-146, and Ser-176.

Belongs to the class I-like SAM-binding methyltransferase superfamily. Cation-dependent O-methyltransferase family. Interacts with LHFPL5, PCDH15, TMC1, TMC2 and TMIE. Interacts directly with TMC1. The interaction of TOMT with TMC1 and TMC2 is required for the transportation of TMC1/2 into the stereocilia of hair cells.

The protein localises to the membrane. It is found in the cytoplasm. It localises to the endoplasmic reticulum. The enzyme catalyses a catechol + S-adenosyl-L-methionine = a guaiacol + S-adenosyl-L-homocysteine + H(+). In terms of biological role, catalyzes the O-methylation, and thereby the inactivation, of catecholamine neurotransmitters and catechol hormones. Required for auditory function. Component of the cochlear hair cell's mechanotransduction (MET) machinery. Involved in the assembly of the asymmetric tip-link MET complex. Required for transportation of TMC1 and TMC2 proteins into the mechanically sensitive stereocilia of the hair cells. The function in MET is independent of the enzymatic activity. The sequence is that of Transmembrane O-methyltransferase from Propithecus coquereli (Coquerel's sifaka).